The sequence spans 347 residues: tRNA pseudouridine synthase D (347 aa).

The Nucleophile role is filled by Asp81. Positions 158 to 305 constitute a TRUD domain; the sequence is GVPNYFGSQR…RHDRRDIALK (148 aa).

Belongs to the pseudouridine synthase TruD family.

The catalysed reaction is uridine(13) in tRNA = pseudouridine(13) in tRNA. Functionally, responsible for synthesis of pseudouridine from uracil-13 in transfer RNAs. This chain is tRNA pseudouridine synthase D, found in Vibrio campbellii (strain ATCC BAA-1116).